The primary structure comprises 202 residues: uncharacterized protein (202 aa).

The HTH tetR-type domain occupies 13–73 (ELAADRILDA…AYVHRETRRL (61 aa)). The H-T-H motif DNA-binding region spans 36–55 (GMNEIAKAAGCSRATLYRYF).

This is an uncharacterized protein from Mycobacterium tuberculosis (strain CDC 1551 / Oshkosh).